We begin with the raw amino-acid sequence, 232 residues long: uncharacterized protein (232 aa).

This is an uncharacterized protein from Acanthamoeba polyphaga (Amoeba).